Reading from the N-terminus, the 645-residue chain is Threonine--tRNA ligase (645 aa).

In terms of domain architecture, TGS spans 1 to 63; that stretch reads MNQINIQFPD…EQDGAIEIIT (63 aa). Positions 242 to 540 are catalytic; the sequence is DHRKIGKDLE…LTEETKGAFP (299 aa). Zn(2+) is bound by residues Cys336, His387, and His517.

It belongs to the class-II aminoacyl-tRNA synthetase family. In terms of assembly, homodimer. The cofactor is Zn(2+).

The protein resides in the cytoplasm. The enzyme catalyses tRNA(Thr) + L-threonine + ATP = L-threonyl-tRNA(Thr) + AMP + diphosphate + H(+). Its function is as follows. Catalyzes the attachment of threonine to tRNA(Thr) in a two-step reaction: L-threonine is first activated by ATP to form Thr-AMP and then transferred to the acceptor end of tRNA(Thr). Also edits incorrectly charged L-seryl-tRNA(Thr). The polypeptide is Threonine--tRNA ligase (Staphylococcus epidermidis (strain ATCC 35984 / DSM 28319 / BCRC 17069 / CCUG 31568 / BM 3577 / RP62A)).